Consider the following 241-residue polypeptide: MATNAKPVYQRILLKLSGEALQGAEGFGIDASVLDRMAQEVKELVELGIQVGVVIGGGNLFRGAGLAQAGMNRVVGDHMGMLATVMNGLAMRDALHRAYVNARLMSAIPLNGVCDNYSWAEAISLLRNNRVVIFSAGTGNPFFTTDSAACLRGIEIEADVVLKATKVDGVYSADPVKNPDATLYEHITYQDVLERELKVMDLAAFTLARDHGLPIRVFNMNKPGALRRVVMGENEGTLISK.

Position 15-18 (15-18 (KLSG)) interacts with ATP. The tract at residues 23–28 (GAEGFG) is involved in allosteric activation by GTP. Gly57 lines the UMP pocket. Residues Gly58 and Arg62 each contribute to the ATP site. Residues Asp77 and 138 to 145 (TGNPFFTT) each bind UMP. The ATP site is built by Thr165, Tyr171, and Asp174.

This sequence belongs to the UMP kinase family. In terms of assembly, homohexamer.

The protein localises to the cytoplasm. It catalyses the reaction UMP + ATP = UDP + ADP. The protein operates within pyrimidine metabolism; CTP biosynthesis via de novo pathway; UDP from UMP (UMPK route): step 1/1. Its activity is regulated as follows. Allosterically activated by GTP. Inhibited by UTP. Catalyzes the reversible phosphorylation of UMP to UDP. This is Uridylate kinase from Serratia proteamaculans (strain 568).